Reading from the N-terminus, the 628-residue chain is 1-deoxy-D-xylulose-5-phosphate synthase (628 aa).

Thiamine diphosphate contacts are provided by residues His-77 and 118–120 (GHS). Asp-150 is a Mg(2+) binding site. Residues 151–152 (GA), Asn-180, Tyr-288, and Glu-369 each bind thiamine diphosphate. Asn-180 is a binding site for Mg(2+).

Belongs to the transketolase family. DXPS subfamily. As to quaternary structure, homodimer. It depends on Mg(2+) as a cofactor. Requires thiamine diphosphate as cofactor.

It catalyses the reaction D-glyceraldehyde 3-phosphate + pyruvate + H(+) = 1-deoxy-D-xylulose 5-phosphate + CO2. The protein operates within metabolic intermediate biosynthesis; 1-deoxy-D-xylulose 5-phosphate biosynthesis; 1-deoxy-D-xylulose 5-phosphate from D-glyceraldehyde 3-phosphate and pyruvate: step 1/1. In terms of biological role, catalyzes the acyloin condensation reaction between C atoms 2 and 3 of pyruvate and glyceraldehyde 3-phosphate to yield 1-deoxy-D-xylulose-5-phosphate (DXP). The sequence is that of 1-deoxy-D-xylulose-5-phosphate synthase from Aquifex aeolicus (strain VF5).